The primary structure comprises 189 residues: Copper transport protein CTR2 (189 aa).

At 1–81 (MDDKKTWSTV…VVFEWWHIKT (81 aa)) the chain is on the cytoplasmic side. Residues 82-102 (LPGLILSCLAIFGLAYLYEYL) form a helical membrane-spanning segment. Residues 103–142 (KYCVHKRQLSQRVLLPNRSLTKINQADKVSNSILYGLQVG) lie on the Vacuolar side of the membrane. The chain crosses the membrane as a helical span at residues 143 to 163 (FSFMLMLVFMTYNGWLMLAVV). Residues 164–189 (CGAIWGNYSWCTSYSPEIDDSSLACH) lie on the Cytoplasmic side of the membrane.

Belongs to the copper transporter (Ctr) (TC 1.A.56) family. SLC31A subfamily. In terms of assembly, homomultimer.

It localises to the vacuole membrane. In terms of biological role, provides bioavailable copper via mobilization of vacuolar copper stores and export to the cytoplasm. The chain is Copper transport protein CTR2 (CTR2) from Saccharomyces cerevisiae (strain ATCC 204508 / S288c) (Baker's yeast).